Here is a 213-residue protein sequence, read N- to C-terminus: Charged multivesicular body protein 2b (213 aa).

A2 carries the post-translational modification N-acetylalanine. The stretch at 25–55 (QRAIIRDRAALEKQEKQLELEIKKMAKIGNK) forms a coiled coil. Over residues 179–194 (AKAPSAARSLPSASTS) the composition is skewed to low complexity. The segment at 179–199 (AKAPSAARSLPSASTSKATIS) is disordered. Position 199 is a phosphoserine (S199). Positions 201–211 (EEIERQLKALG) match the MIT-interacting motif motif.

Belongs to the SNF7 family. Probable core component of the endosomal sorting required for transport complex III (ESCRT-III). ESCRT-III components are thought to multimerize to form a flat lattice on the perimeter membrane of the endosome. Several assembly forms of ESCRT-III may exist that interact and act sequentially. Interacts with CHMP2A. Interacts with VPS4A. Interacts with VPS4B; the interaction is direct. Widely expressed. Expressed in brain, heart, skeletal muscle, spleen, kidney, liver, small intestine, pancreas, lung, placenta and leukocytes. In brain, it is expressed in cerebellum, cerebral cortex, medulla, spinal cord, occipital lobe, frontal lobe, temporal lobe and putamen.

It is found in the cytoplasm. The protein resides in the cytosol. Its subcellular location is the late endosome membrane. Probable core component of the endosomal sorting required for transport complex III (ESCRT-III) which is involved in multivesicular bodies (MVBs) formation and sorting of endosomal cargo proteins into MVBs. MVBs contain intraluminal vesicles (ILVs) that are generated by invagination and scission from the limiting membrane of the endosome and mostly are delivered to lysosomes enabling degradation of membrane proteins, such as stimulated growth factor receptors, lysosomal enzymes and lipids. The MVB pathway appears to require the sequential function of ESCRT-O, -I,-II and -III complexes. ESCRT-III proteins mostly dissociate from the invaginating membrane before the ILV is released. The ESCRT machinery also functions in topologically equivalent membrane fission events, such as the terminal stages of cytokinesis and the budding of enveloped viruses (HIV-1 and other lentiviruses). ESCRT-III proteins are believed to mediate the necessary vesicle extrusion and/or membrane fission activities, possibly in conjunction with the AAA ATPase VPS4. The sequence is that of Charged multivesicular body protein 2b (CHMP2B) from Homo sapiens (Human).